The sequence spans 1121 residues: Solute carrier family 38 member 10 (1121 aa).

10 helical membrane passes run 4 to 24 (AAAS…GVSV), 36 to 58 (IVLG…MFLV), 84 to 104 (LVET…YVVI), 120 to 140 (VGGT…VLPL), 153 to 173 (FSAM…LSSL), 229 to 249 (IFAS…FFGY), 272 to 292 (MLRV…ILPC), 323 to 343 (ALTL…PNVE), 345 to 365 (ILGL…PALI), and 378 to 398 (VVLW…LSVS). Disordered stretches follow at residues 434 to 691 (VVAV…EEAG), 731 to 904 (KEIH…AATG), and 965 to 1068 (ISDG…ELAP). Composition is skewed to basic and acidic residues over residues 439 to 454 (EDGR…REEL), 466 to 475 (PGREDGKEAQ), 493 to 508 (EAHR…KVVV), and 544 to 559 (DSER…EVGK). S612 is modified (phosphoserine). Composition is skewed to basic and acidic residues over residues 645–659 (DSDH…EEKP), 668–679 (EPREQRDVERAG), 731–752 (KEIH…EVHP), 763–773 (EAPEGKARETM), 802–811 (SLEHPERPVG), and 863–876 (PARE…RLAE). T772 carries the post-translational modification Phosphothreonine. The residue at position 802 (S802) is a Phosphoserine. A phosphoserine mark is found at S890 and S966. Basic and acidic residues predominate over residues 976–998 (HRLDHGGYLEMRKEARGGDHMPV). A Phosphoserine modification is found at S999. 2 stretches are compositionally biased toward basic and acidic residues: residues 1035–1044 (DNAKPNRDLK) and 1057–1068 (DLGPHAEGELAP).

The protein belongs to the amino acid/polyamine transporter 2 family.

It is found in the membrane. The catalysed reaction is L-glutamate(out) = L-glutamate(in). It carries out the reaction L-glutamine(out) = L-glutamine(in). The enzyme catalyses L-alanine(in) = L-alanine(out). It catalyses the reaction L-serine(in) = L-serine(out). The catalysed reaction is L-leucine(in) = L-leucine(out). Facilitates bidirectional transport of amino acids. May act as a glutamate sensor that regulates glutamate-glutamine cycle and mTOR signaling in the brain. The transport mechanism remains to be elucidated. The sequence is that of Solute carrier family 38 member 10 from Pongo abelii (Sumatran orangutan).